Reading from the N-terminus, the 428-residue chain is MSEENVQEFVLKEDCELRFAAGDDSDVCLELVKGYAEIFGTELLLNKKYTFPAKSRVAAFTWKGATIELVGTTESAYVAESTPMVIYLNIHAAMEEVRKKREEQAAGNSNKAKGPRLLLVGPTDVGKTTVSRILCNYSVRQGRTPIFVELDVGQNSVSVPGTVAAVLVQKTADVIDGFERNQPIVFNFGHTSPSANLSLYEALFKEMATTLNAQIQENDEAKIGGMIINTCGWVDGEGYKCIVKAASAFEVDVVIVLDHERLYSDLSKELPEFVRLTHVPKSGGVEQRTGQIRSKMRGENVHRYFYGTRANNLYPFTFDVSFDDVTLCKIGAEQLPDSCLPFGMEVENHETKLVIMEPSADIKHHLFAFSRSTKADENVLKSPVFGFCLVTEVDLEKRTMSILCPQRTIPSKVLVFSDITHLDDQIKR.

ATP-binding positions include Glu16, Arg56, and 124–129 (DVGKTT).

This sequence belongs to the Clp1 family. Clp1 subfamily.

It is found in the nucleus. In terms of biological role, required for endonucleolytic cleavage during polyadenylation-dependent pre-mRNA 3'-end formation. The polypeptide is Protein clpf-1 (Caenorhabditis elegans).